We begin with the raw amino-acid sequence, 451 residues long: Hexokinase (451 aa).

Positions 6 to 445 constitute a Hexokinase domain; that stretch reads QQLFEKVVEI…SGKGAAAIAA (440 aa). The interval 63-195 is hexokinase small subdomain; that stretch reads NGTETGNFLA…ELNVKCVAVV (133 aa). 74 to 79 is a binding site for ATP; it reads DLGGTN. Substrate is bound by residues serine 144, 161 to 162, 196 to 197, 222 to 223, glutamate 249, and glutamate 283; these read TK, ND, and TN. Residues 196–434 form a hexokinase large subdomain region; that stretch reads NDTVGTLASC…TRFCLRLSED (239 aa). ATP is bound by residues 288 to 289, 325 to 329, and 401 to 405; these read GM, TRYLT, and SLYKF.

This sequence belongs to the hexokinase family. Monomer.

The enzyme catalyses a D-hexose + ATP = a D-hexose 6-phosphate + ADP + H(+). It catalyses the reaction D-mannose + ATP = D-mannose 6-phosphate + ADP + H(+). It carries out the reaction D-fructose + ATP = D-fructose 6-phosphate + ADP + H(+). The catalysed reaction is D-glucose + ATP = D-glucose 6-phosphate + ADP + H(+). It participates in carbohydrate metabolism; hexose metabolism. The protein operates within carbohydrate degradation; glycolysis; D-glyceraldehyde 3-phosphate and glycerone phosphate from D-glucose: step 1/4. In terms of biological role, catalyzes the phosphorylation of various hexoses to hexose 6-phosphate. This is Hexokinase from Schistosoma mansoni (Blood fluke).